The sequence spans 423 residues: Serine hydroxymethyltransferase (423 aa).

Residues leucine 121 and 125 to 127 (GHL) contribute to the (6S)-5,6,7,8-tetrahydrofolate site. Lysine 230 carries the post-translational modification N6-(pyridoxal phosphate)lysine. 355–357 (SPF) contributes to the (6S)-5,6,7,8-tetrahydrofolate binding site.

This sequence belongs to the SHMT family. As to quaternary structure, homodimer. Requires pyridoxal 5'-phosphate as cofactor.

It is found in the cytoplasm. It catalyses the reaction (6R)-5,10-methylene-5,6,7,8-tetrahydrofolate + glycine + H2O = (6S)-5,6,7,8-tetrahydrofolate + L-serine. It functions in the pathway one-carbon metabolism; tetrahydrofolate interconversion. It participates in amino-acid biosynthesis; glycine biosynthesis; glycine from L-serine: step 1/1. Catalyzes the reversible interconversion of serine and glycine with tetrahydrofolate (THF) serving as the one-carbon carrier. This reaction serves as the major source of one-carbon groups required for the biosynthesis of purines, thymidylate, methionine, and other important biomolecules. Also exhibits THF-independent aldolase activity toward beta-hydroxyamino acids, producing glycine and aldehydes, via a retro-aldol mechanism. The sequence is that of Serine hydroxymethyltransferase from Hydrogenovibrio crunogenus (strain DSM 25203 / XCL-2) (Thiomicrospira crunogena).